A 462-amino-acid chain; its full sequence is Glycine--tRNA ligase (462 aa).

Positions 98 and 174 each coordinate substrate. ATP is bound by residues 206–208, 216–221, 290–291, and 334–337; these read RNE, FRTREF, EL, and GADR. 221–225 lines the substrate pocket; that stretch reads FEQME. 330 to 334 is a binding site for substrate; sequence EPSLG.

Belongs to the class-II aminoacyl-tRNA synthetase family. Homodimer.

The protein localises to the cytoplasm. The enzyme catalyses tRNA(Gly) + glycine + ATP = glycyl-tRNA(Gly) + AMP + diphosphate. In terms of biological role, catalyzes the attachment of glycine to tRNA(Gly). The chain is Glycine--tRNA ligase from Lachnoclostridium phytofermentans (strain ATCC 700394 / DSM 18823 / ISDg) (Clostridium phytofermentans).